Here is a 143-residue protein sequence, read N- to C-terminus: Transcriptional regulator MraZ (143 aa).

SpoVT-AbrB domains follow at residues 5–47 (TYTP…PRAE) and 76–119 (TDEQ…DAAA).

The protein belongs to the MraZ family. In terms of assembly, forms oligomers.

It localises to the cytoplasm. The protein resides in the nucleoid. This is Transcriptional regulator MraZ from Mycobacterium sp. (strain JLS).